A 213-amino-acid polypeptide reads, in one-letter code: Thiamine-phosphate synthase (213 aa).

4-amino-2-methyl-5-(diphosphooxymethyl)pyrimidine contacts are provided by residues 40-44 (QYRDK) and Asn72. Mg(2+)-binding residues include Asp73 and Asp91. Thr110 contributes to the 4-amino-2-methyl-5-(diphosphooxymethyl)pyrimidine binding site. 137-139 (SHT) contributes to the 2-[(2R,5Z)-2-carboxy-4-methylthiazol-5(2H)-ylidene]ethyl phosphate binding site. Lys140 is a binding site for 4-amino-2-methyl-5-(diphosphooxymethyl)pyrimidine. 2-[(2R,5Z)-2-carboxy-4-methylthiazol-5(2H)-ylidene]ethyl phosphate is bound at residue Gly167.

The protein belongs to the thiamine-phosphate synthase family. It depends on Mg(2+) as a cofactor.

It carries out the reaction 2-[(2R,5Z)-2-carboxy-4-methylthiazol-5(2H)-ylidene]ethyl phosphate + 4-amino-2-methyl-5-(diphosphooxymethyl)pyrimidine + 2 H(+) = thiamine phosphate + CO2 + diphosphate. The catalysed reaction is 2-(2-carboxy-4-methylthiazol-5-yl)ethyl phosphate + 4-amino-2-methyl-5-(diphosphooxymethyl)pyrimidine + 2 H(+) = thiamine phosphate + CO2 + diphosphate. The enzyme catalyses 4-methyl-5-(2-phosphooxyethyl)-thiazole + 4-amino-2-methyl-5-(diphosphooxymethyl)pyrimidine + H(+) = thiamine phosphate + diphosphate. Its pathway is cofactor biosynthesis; thiamine diphosphate biosynthesis; thiamine phosphate from 4-amino-2-methyl-5-diphosphomethylpyrimidine and 4-methyl-5-(2-phosphoethyl)-thiazole: step 1/1. Functionally, condenses 4-methyl-5-(beta-hydroxyethyl)thiazole monophosphate (THZ-P) and 2-methyl-4-amino-5-hydroxymethyl pyrimidine pyrophosphate (HMP-PP) to form thiamine monophosphate (TMP). The sequence is that of Thiamine-phosphate synthase from Stutzerimonas stutzeri (strain A1501) (Pseudomonas stutzeri).